Here is a 424-residue protein sequence, read N- to C-terminus: Dihydrolipoyllysine-residue succinyltransferase component of 2-oxoglutarate dehydrogenase complex (424 aa).

The Lipoyl-binding domain occupies 1–76 (MPEVKVPELA…EVGQAIAVVG (76 aa)). Lysine 42 is modified (N6-lipoyllysine). Disordered stretches follow at residues 76 to 138 (GEGS…KYAR) and 155 to 204 (VRKE…RKKT). A compositionally biased stretch (basic and acidic residues) spans 91 to 105 (EAPKQETETSTDDKS). Positions 122 to 131 (DNNQRVNATP) are enriched in polar residues. A Peripheral subunit-binding (PSBD) domain is found at 128 to 164 (NATPSARKYAREKGIDLSEIAAASNDVVRKEHVDQSQ). Low complexity predominate over residues 162–176 (QSQTQTSTQQQAQPA). Catalysis depends on residues histidine 395 and aspartate 399.

It belongs to the 2-oxoacid dehydrogenase family. In terms of assembly, forms a 24-polypeptide structural core with octahedral symmetry. Part of the 2-oxoglutarate dehydrogenase (OGDH) complex composed of E1 (2-oxoglutarate dehydrogenase), E2 (dihydrolipoamide succinyltransferase) and E3 (dihydrolipoamide dehydrogenase); the complex contains multiple copies of the three enzymatic components (E1, E2 and E3). The cofactor is (R)-lipoate.

The catalysed reaction is N(6)-[(R)-dihydrolipoyl]-L-lysyl-[protein] + succinyl-CoA = N(6)-[(R)-S(8)-succinyldihydrolipoyl]-L-lysyl-[protein] + CoA. The protein operates within amino-acid degradation; L-lysine degradation via saccharopine pathway; glutaryl-CoA from L-lysine: step 6/6. In terms of biological role, E2 component of the 2-oxoglutarate dehydrogenase (OGDH) complex which catalyzes the second step in the conversion of 2-oxoglutarate to succinyl-CoA and CO(2). In Staphylococcus saprophyticus subsp. saprophyticus (strain ATCC 15305 / DSM 20229 / NCIMB 8711 / NCTC 7292 / S-41), this protein is Dihydrolipoyllysine-residue succinyltransferase component of 2-oxoglutarate dehydrogenase complex (odhB).